The following is a 930-amino-acid chain: MSQSPRFVTRRGGSLKAAPGAGTRRNESQDYLLMDELGDDGYPQLPLPPYGYYPSFRGNENRLTHRRQTILREKGRRLANRGPAYMFNDHSTSLSIEEERFLDAAEYGNIPVVRKMLEECHSLNVNCVDYMGQNALQLAVANEHLEITELLLKKENLSRVGDALLLAISKGYVRIVEAILNHPAFAEGKRLATSPSQSELQQDDFYAYDEDGTRFSHDVTPIILAAHCQEYEIVHTLLRKGARIERPHDYFCKCTECSQKQKHDSFSHSRSRINAYKGLASPAYLSLSSEDPVMTALELSNELAVLANIEKEFKNDYRKLSMQCKDFVVGLLDLCRNTEEVEAILNGDAETRQPGDFGRPNLSRLKLAIKYEVKKFVAHPNCQQQLLSIWYENLSGLRQQTMAVKFLVVLAVAIGLPFLALIYWCAPCSKMGKILRGPFMKFVAHAASFTIFLGLLVMNAADRFEGTKLLPNETSTDNARQLFRMKTSCFSWMEMLIISWVIGMIWAECKEIWTQGPKEYLFELWNMLDFGMLAIFAASFIARFMAFWHASKAQSIIDANDTLKDLTKVTLGDNVKYYNLARIKWDPTDPQIISEGLYAIAVVLSFSRIAYILPANESFGPLQISLGRTVKDIFKFMVIFIMVFVAFMIGMFNLYSYYIGAKQNEAFTTVEESFKTLFWAIFGLSEVKSVVINYNHKFIENIGYVLYGVYNVTMVIVLLNMLIAMINSSFQEIEDDADVEWKFARAKLWFSYFEEGRTLPVPFNLVPSPKSLLYLLLKFKKWMCELIQGQKQGFQEDAEMNKRNEEKKFGISGSHEDLSKFSLDKNQLAHNKQSSTRSSEDYHLNSFSNPPRQYQKIMKRLIKRYVLQAQIDKESDEVNEGELKEIKQDISSLRYELLEEKSQNTEDLAELIRKLGERLSLEPKLEESRR.

Residues 1-27 (MSQSPRFVTRRGGSLKAAPGAGTRRNE) form a disordered region. The Cytoplasmic segment spans residues 1–437 (MSQSPRFVTR…CSKMGKILRG (437 aa)). ANK repeat units lie at residues 96–125 (IEEE…SLNV), 131–160 (MGQN…LSRV), 162–188 (DALL…FAEG), and 217–246 (HDVT…RIER). Residues 438 to 458 (PFMKFVAHAASFTIFLGLLVM) traverse the membrane as a helical segment. At 459–486 (NAADRFEGTKLLPNETSTDNARQLFRMK) the chain is on the extracellular side. A helical transmembrane segment spans residues 487-507 (TSCFSWMEMLIISWVIGMIWA). Topologically, residues 508 to 520 (ECKEIWTQGPKEY) are cytoplasmic. The helical transmembrane segment at 521-541 (LFELWNMLDFGMLAIFAASFI) threads the bilayer. Over 542-591 (ARFMAFWHASKAQSIIDANDTLKDLTKVTLGDNVKYYNLARIKWDPTDPQ) the chain is Extracellular. Asparagine 560 carries N-linked (GlcNAc...) asparagine glycosylation. The helical transmembrane segment at 592–612 (IISEGLYAIAVVLSFSRIAYI) threads the bilayer. The Cytoplasmic portion of the chain corresponds to 613–635 (LPANESFGPLQISLGRTVKDIFK). The helical transmembrane segment at 636–656 (FMVIFIMVFVAFMIGMFNLYS) threads the bilayer. Residues 657–705 (YYIGAKQNEAFTTVEESFKTLFWAIFGLSEVKSVVINYNHKFIENIGYV) lie on the Extracellular side of the membrane. The chain crosses the membrane as a helical span at residues 706-726 (LYGVYNVTMVIVLLNMLIAMI). The Cytoplasmic segment spans residues 727–930 (NSSFQEIEDD…LEPKLEESRR (204 aa)). Serine 814 is modified (phosphoserine).

The protein belongs to the transient receptor (TC 1.A.4) family. STrpC subfamily. TRPC6 sub-subfamily. As to quaternary structure, homodimer; forms channel complex. Interacts with MX1 and RNF24. Post-translationally, phosphorylated by FYN, leading to an increase of TRPC6 channel activity. In terms of processing, N-glycosylated. Lung and brain.

The protein localises to the cell membrane. The enzyme catalyses Ca(2+)(in) = Ca(2+)(out). Functionally, forms a receptor-activated non-selective calcium permeant cation channel. Probably is operated by a phosphatidylinositol second messenger system activated by receptor tyrosine kinases or G-protein coupled receptors. Activated by diacylglycerol (DAG) in a membrane-delimited fashion, independently of protein kinase C. Seems not to be activated by intracellular calcium store depletion. In Mus musculus (Mouse), this protein is Short transient receptor potential channel 6.